We begin with the raw amino-acid sequence, 63 residues long: Large ribosomal subunit protein bL32 (63 aa).

The segment at 1–45 is disordered; the sequence is MAVQQNKKSRSRRDMRRSHDALTKPTLSVDPTTGETHLRHHMTPD. The segment covering 7–16 has biased composition (basic residues); it reads KKSRSRRDMR. A compositionally biased stretch (polar residues) spans 25–35; it reads PTLSVDPTTGE.

It belongs to the bacterial ribosomal protein bL32 family.

The protein is Large ribosomal subunit protein bL32 of Legionella pneumophila (strain Paris).